The sequence spans 29 residues: VNEPADXXARFTYDXYGLXVVGLIVAAVL.

The protein belongs to the FXYD family. In terms of processing, phosphorylated by protein kinase C.

It is found in the membrane. Induces a hyperpolarization-activated chloride current when expressed in Xenopus oocytes. This is Phospholemman-like protein from Scyliorhinus canicula (Small-spotted catshark).